We begin with the raw amino-acid sequence, 315 residues long: Carbamate kinase (315 aa).

It belongs to the carbamate kinase family. As to quaternary structure, homodimer.

It is found in the cytoplasm. It catalyses the reaction hydrogencarbonate + NH4(+) + ATP = carbamoyl phosphate + ADP + H2O + H(+). This is Carbamate kinase (cpkA) from Thermococcus kodakarensis (strain ATCC BAA-918 / JCM 12380 / KOD1) (Pyrococcus kodakaraensis (strain KOD1)).